The following is a 291-amino-acid chain: Small ribosomal subunit biogenesis GTPase RsgA (291 aa).

One can recognise a CP-type G domain in the interval 63 to 221 (ENELKRPPVS…IADTPGFSAL (159 aa)). GTP contacts are provided by residues 112 to 115 (TKKD) and 164 to 172 (GQSGVGKST). Positions 245, 250, 252, and 258 each coordinate Zn(2+).

This sequence belongs to the TRAFAC class YlqF/YawG GTPase family. RsgA subfamily. As to quaternary structure, monomer. Associates with 30S ribosomal subunit, binds 16S rRNA. Zn(2+) is required as a cofactor.

The protein resides in the cytoplasm. In terms of biological role, one of several proteins that assist in the late maturation steps of the functional core of the 30S ribosomal subunit. Helps release RbfA from mature subunits. May play a role in the assembly of ribosomal proteins into the subunit. Circularly permuted GTPase that catalyzes slow GTP hydrolysis, GTPase activity is stimulated by the 30S ribosomal subunit. The protein is Small ribosomal subunit biogenesis GTPase RsgA of Staphylococcus aureus (strain COL).